The chain runs to 61 residues: Large ribosomal subunit protein uL30 (61 aa).

Belongs to the universal ribosomal protein uL30 family. In terms of assembly, part of the 50S ribosomal subunit.

This is Large ribosomal subunit protein uL30 from Lacticaseibacillus casei (strain BL23) (Lactobacillus casei).